A 235-amino-acid chain; its full sequence is MEEAIDDHVKLPQKRFYRQRAHSNPIADHSFDYPLLPELSNWNELYPNIGNRQVVFADIGCGYGGFLVTLGETFPDKLAIGMEIRVKVSDYVMDRIKALRQRHKGKYENIACIRTNAMKYLPNYFRKHQLEKLFFLYPDPHFKKAKHKWRIINPTLLSEYAYVLRPGGKIYTVTDVRELHEWMCKHIEEHPCFKRLPDTEAQEDILAPKLLDSSEEGQKVTRMSGEKFMAIFTRL.

Residues Gly-60, 83-84 (EI), 116-117 (NA), and Leu-136 contribute to the S-adenosyl-L-methionine site. Asp-139 is a catalytic residue. Residue 214–216 (SEE) coordinates S-adenosyl-L-methionine.

It belongs to the class I-like SAM-binding methyltransferase superfamily. TrmB family.

Its subcellular location is the nucleus. It catalyses the reaction guanosine(46) in tRNA + S-adenosyl-L-methionine = N(7)-methylguanosine(46) in tRNA + S-adenosyl-L-homocysteine. The protein operates within tRNA modification; N(7)-methylguanine-tRNA biosynthesis. Its function is as follows. Catalyzes the formation of N(7)-methylguanine at position 46 (m7G46) in tRNA. This chain is tRNA (guanine-N(7)-)-methyltransferase, found in Anopheles gambiae (African malaria mosquito).